Here is a 307-residue protein sequence, read N- to C-terminus: Melanoma-associated antigen F1 (307 aa).

The disordered stretch occupies residues 1–55 (MLQTPESRGLPVPQAEGEKDGGHDGETRAPTASQERPKEELGAGREEGAAEPALT). 2 stretches are compositionally biased toward basic and acidic residues: residues 16-27 (EGEKDGGHDGET) and 35-48 (ERPK…REEG). The MAGE domain occupies 76-277 (LNRTVAELVQ…HWPVQYREAL (202 aa)).

Interacts (via MAGE domain) with RING-type zinc finger-containing E3 ubiquitin-protein ligases LNX1, TRIM27 and NSMCE1; the interaction is direct. As to expression, ubiquitous.

In terms of biological role, enhances ubiquitin ligase activity of RING-type zinc finger-containing E3 ubiquitin ligases. Proposed to act through recruitment and/or stabilization of the E2 ubiquitin-conjugating enzyme at the E3:substrate complex. MAGEF1-NSMCE1 ubiquitin ligase complex promotes proteasomal degradation of MMS19, a key component of the cytosolic iron-sulfur protein assembly (CIA) machinery. Down-regulation of MMS19 impairs the activity of several DNA repair and metabolism enzymes such as ERCC2/XPD, FANCJ, RTEL1 and POLD1 that require iron-sulfur clusters as cofactors. May negatively regulate genome integrity by inhibiting homologous recombination-mediated double-strand break DNA repair. The protein is Melanoma-associated antigen F1 of Homo sapiens (Human).